The sequence spans 417 residues: MPAFKSDFLRTMSERGFIHQISDETGLDQLFAKETVTAYVGYDATATSLHIGNLISATMLYWLQETGHRPIALMGGGTSMIGDPSFRDDQRSLLTPEAIATNIEGIKRIFGRILRFGDGPNDAIMVNNADWLMKLNYVEFLRDVGRHFSVNRMLTFDSVKLRLDREQSLSFLEFNYMILQGYDFVELARRQNCRLQMGGSDQWGNIINGVDLGHRMGTPQLYALTTPLLTTSSGAKMGKSAKGAVWLNGDLFSPYDFWQYWRNTEDADVERFLKIFTRLPLPEIARLAALGGSEINEAKKILATETTAIVHGREAANQAEETARKTFEEGALADTLPTVGADKAALEAGIGILSLLVTAGLASSNGEARRHIQGGAVRINDQSVSDDRRMVTLQDLSPENVVKLSLGKKKHVLVRPA.

Y39 contributes to the L-tyrosine binding site. The short motif at A44–N53 is the 'HIGH' region element. Y176 and Q180 together coordinate L-tyrosine. The 'KMSKS' region signature appears at K236–S240. K239 lines the ATP pocket. The S4 RNA-binding domain maps to I350 to P416.

The protein belongs to the class-I aminoacyl-tRNA synthetase family. TyrS type 1 subfamily. Homodimer.

The protein localises to the cytoplasm. The catalysed reaction is tRNA(Tyr) + L-tyrosine + ATP = L-tyrosyl-tRNA(Tyr) + AMP + diphosphate + H(+). Catalyzes the attachment of tyrosine to tRNA(Tyr) in a two-step reaction: tyrosine is first activated by ATP to form Tyr-AMP and then transferred to the acceptor end of tRNA(Tyr). In Mesorhizobium japonicum (strain LMG 29417 / CECT 9101 / MAFF 303099) (Mesorhizobium loti (strain MAFF 303099)), this protein is Tyrosine--tRNA ligase.